We begin with the raw amino-acid sequence, 476 residues long: Aspartyl/glutamyl-tRNA(Asn/Gln) amidotransferase subunit B (476 aa).

The protein belongs to the GatB/GatE family. GatB subfamily. As to quaternary structure, heterotrimer of A, B and C subunits.

The enzyme catalyses L-glutamyl-tRNA(Gln) + L-glutamine + ATP + H2O = L-glutaminyl-tRNA(Gln) + L-glutamate + ADP + phosphate + H(+). It carries out the reaction L-aspartyl-tRNA(Asn) + L-glutamine + ATP + H2O = L-asparaginyl-tRNA(Asn) + L-glutamate + ADP + phosphate + 2 H(+). Its function is as follows. Allows the formation of correctly charged Asn-tRNA(Asn) or Gln-tRNA(Gln) through the transamidation of misacylated Asp-tRNA(Asn) or Glu-tRNA(Gln) in organisms which lack either or both of asparaginyl-tRNA or glutaminyl-tRNA synthetases. The reaction takes place in the presence of glutamine and ATP through an activated phospho-Asp-tRNA(Asn) or phospho-Glu-tRNA(Gln). The chain is Aspartyl/glutamyl-tRNA(Asn/Gln) amidotransferase subunit B from Lactobacillus helveticus (strain DPC 4571).